The sequence spans 191 residues: Molybdenum cofactor guanylyltransferase (191 aa).

Residues 11–13 (LCG), K23, D66, and D97 contribute to the GTP site. Mg(2+) is bound at residue D97.

This sequence belongs to the MobA family. Monomer. It depends on Mg(2+) as a cofactor.

It localises to the cytoplasm. It catalyses the reaction Mo-molybdopterin + GTP + H(+) = Mo-molybdopterin guanine dinucleotide + diphosphate. Its function is as follows. Transfers a GMP moiety from GTP to Mo-molybdopterin (Mo-MPT) cofactor (Moco or molybdenum cofactor) to form Mo-molybdopterin guanine dinucleotide (Mo-MGD) cofactor. The polypeptide is Molybdenum cofactor guanylyltransferase (Campylobacter jejuni subsp. jejuni serotype O:6 (strain 81116 / NCTC 11828)).